Reading from the N-terminus, the 260-residue chain is HTH-type transcriptional repressor NanR (260 aa).

Residues 27-95 enclose the HTH gntR-type domain; it reads KKLSEMVEEE…NGERARVSRP (69 aa). Residues 55 to 74 constitute a DNA-binding region (H-T-H motif); sequence ERELMAFFNVGRPSVREALA.

Belongs to the NanR family.

Functionally, transcriptional repressor that controls expression of the genes required for the catabolism of sialic acids. The protein is HTH-type transcriptional repressor NanR of Citrobacter rodentium (strain ICC168) (Citrobacter freundii biotype 4280).